Reading from the N-terminus, the 672-residue chain is Spermatid perinuclear RNA-binding protein (672 aa).

In terms of domain architecture, DZF spans R5–L363. Disordered regions lie at residues T52–Y73 and G349–K371. The span at R357 to K371 shows a compositional bias: basic and acidic residues. The region spanning D387 to Y453 is the DRBM 1 domain. Basic and acidic residues predominate over residues S466 to N476. The interval S466–E499 is disordered. Over residues E477–T497 the composition is skewed to low complexity. Residues S510–S576 form the DRBM 2 domain. 2 positions are modified to asymmetric dimethylarginine: R612 and R617.

In terms of assembly, interacts with EIF2AK2. Associates with microtubules; it is unsure whether such interaction is direct or indirect.

It is found in the cytoplasm. Its function is as follows. Involved in spermatogenesis and sperm function. Plays a role in regulation of cell growth. Binds to double-stranded DNA and RNA. Binds most efficiently to poly(I:C) RNA than to poly(dI:dC) DNA. Binds also to single-stranded poly(G) RNA. Binds non-specifically to the mRNA PRM1 3'-UTR and adenovirus VA RNA. The chain is Spermatid perinuclear RNA-binding protein (STRBP) from Homo sapiens (Human).